Reading from the N-terminus, the 300-residue chain is Transcription termination/antitermination protein NusG (300 aa).

The segment at 1 to 99 (MSDPNVNDAI…EAEEPELDPI (99 aa)) is disordered. 2 stretches are compositionally biased toward acidic residues: residues 14–41 (ESVE…EAAD) and 47–97 (ETDE…PELD).

Belongs to the NusG family.

In terms of biological role, participates in transcription elongation, termination and antitermination. The sequence is that of Transcription termination/antitermination protein NusG from Streptomyces coelicolor (strain ATCC BAA-471 / A3(2) / M145).